A 101-amino-acid chain; its full sequence is Small ribosomal subunit protein uS10 (101 aa).

The protein belongs to the universal ribosomal protein uS10 family. In terms of assembly, part of the 30S ribosomal subunit.

Involved in the binding of tRNA to the ribosomes. This is Small ribosomal subunit protein uS10 from Corynebacterium efficiens (strain DSM 44549 / YS-314 / AJ 12310 / JCM 11189 / NBRC 100395).